Consider the following 142-residue polypeptide: UPF0102 protein Synpcc7942_0312 (142 aa).

It belongs to the UPF0102 family.

In Synechococcus elongatus (strain ATCC 33912 / PCC 7942 / FACHB-805) (Anacystis nidulans R2), this protein is UPF0102 protein Synpcc7942_0312.